The primary structure comprises 726 residues: Catalase-peroxidase (726 aa).

Residues 1–33 (MSTTDDTHNTLSTGKCPFHQGGHDRSAGAGTAS) form a disordered region. Residues 105–226 (WHGAGTYRSI…LGATEMGLIY (122 aa)) constitute a cross-link (tryptophyl-tyrosyl-methioninium (Trp-Tyr) (with M-252)). Residue His-106 is the Proton acceptor of the active site. The segment at residues 226–252 (YVNPEGPDHSGEPLSAAAAIRATFGNM) is a cross-link (tryptophyl-tyrosyl-methioninium (Tyr-Met) (with W-105)). His-267 is a heme b binding site.

The protein belongs to the peroxidase family. Peroxidase/catalase subfamily. In terms of assembly, homodimer or homotetramer. Heme b is required as a cofactor. Formation of the three residue Trp-Tyr-Met cross-link is important for the catalase, but not the peroxidase activity of the enzyme.

It carries out the reaction H2O2 + AH2 = A + 2 H2O. It catalyses the reaction 2 H2O2 = O2 + 2 H2O. In terms of biological role, bifunctional enzyme with both catalase and broad-spectrum peroxidase activity. This is Catalase-peroxidase from Salmonella typhi.